A 520-amino-acid polypeptide reads, in one-letter code: Cytochrome P450 72A68 (520 aa).

A helical transmembrane segment spans residues 11–31; sequence IILITVTFGLVYAWRVLNWMW. Cysteine 466 serves as a coordination point for heme.

It belongs to the cytochrome P450 family. Heme serves as cofactor.

The protein resides in the membrane. It catalyses the reaction oleanolate + 3 reduced [NADPH--hemoprotein reductase] + 3 O2 = gypsogenate + 3 oxidized [NADPH--hemoprotein reductase] + 4 H2O + 4 H(+). Functionally, catalyzes the carboxylation of oleanolic acid at the C-23 position to form gypsogenic acid. Involved in the hemolytic saponin biosynthetic pathway. The sequence is that of Cytochrome P450 72A68 from Medicago truncatula (Barrel medic).